We begin with the raw amino-acid sequence, 219 residues long: Holliday junction branch migration complex subunit RuvA (219 aa).

The domain I stretch occupies residues 1–66; the sequence is MIEYIIGKIS…NFLFEYYGFK (66 aa). Residues 67 to 148 are domain II; that stretch reads TLREKIFFEN…SEYNNDVNHS (82 aa). Positions 149 to 154 are flexible linker; that stretch reads SINQQS. Residues 155–219 are domain III; the sequence is NSYNPVPDLV…EAVTNKTTVS (65 aa).

Belongs to the RuvA family. Homotetramer. Forms an RuvA(8)-RuvB(12)-Holliday junction (HJ) complex. HJ DNA is sandwiched between 2 RuvA tetramers; dsDNA enters through RuvA and exits via RuvB. An RuvB hexamer assembles on each DNA strand where it exits the tetramer. Each RuvB hexamer is contacted by two RuvA subunits (via domain III) on 2 adjacent RuvB subunits; this complex drives branch migration. In the full resolvosome a probable DNA-RuvA(4)-RuvB(12)-RuvC(2) complex forms which resolves the HJ.

The protein resides in the cytoplasm. In terms of biological role, the RuvA-RuvB-RuvC complex processes Holliday junction (HJ) DNA during genetic recombination and DNA repair, while the RuvA-RuvB complex plays an important role in the rescue of blocked DNA replication forks via replication fork reversal (RFR). RuvA specifically binds to HJ cruciform DNA, conferring on it an open structure. The RuvB hexamer acts as an ATP-dependent pump, pulling dsDNA into and through the RuvAB complex. HJ branch migration allows RuvC to scan DNA until it finds its consensus sequence, where it cleaves and resolves the cruciform DNA. The protein is Holliday junction branch migration complex subunit RuvA of Malacoplasma penetrans (strain HF-2) (Mycoplasma penetrans).